The chain runs to 710 residues: Amyloid beta precursor protein binding family B member 1 (710 aa).

Over residues 1 to 15 (MSVPSSLSQSAINAN) the composition is skewed to polar residues. Disordered regions lie at residues 1-24 (MSVPSSLSQSAINANSHGGPALSL), 131-254 (GLRG…TDSD), 276-299 (GTTQWEPPGRASPSQGSSPQEESQ), and 340-365 (TFPAQSLSPEPLPQEEEKLPPRNTNP). Over residues 145 to 173 (GPDEGEEKAAGEAEEEEEDDDDEEEEEDL) the composition is skewed to acidic residues. N6-acetyllysine is present on Lys204. Over residues 223 to 234 (SWATLSQGSPSY) the composition is skewed to polar residues. The WW domain occupies 253–285 (SDLPAGWMRVQDTSGTYYWHIPTGTTQWEPPGR). Low complexity predominate over residues 287-299 (SPSQGSSPQEESQ). A PID 1 domain is found at 370–509 (FAVRSLGWVE…SKIMAERRNA (140 aa)). Position 459 is a phosphoserine; by PKC (Ser459). Phosphoserine is present on Ser517. The region spanning 542-699 (KFQVYYLGNV…RRGVQSLWGS (158 aa)) is the PID 2 domain. A Phosphotyrosine; by ABL1 modification is found at Tyr547. Ser610 carries the post-translational modification Phosphoserine; by SGK1. Lys701 carries the post-translational modification N6-acetyllysine.

Component of a complex, at least composed of APBB1, RASD1/DEXRAS1 and APP. Interacts (via PID domain 2) with APP (with the intracellular domain of the amyloid-beta precursor protein). Interacts (via PID domain 2) with RASD1/DEXRAS1; impairs the transcription activation activity. Interacts (via PID domain 1) with KAT5/TIP60. Interacts (via the WW domain) with the proline-rich region of APBB1IP. Interacts with TSHZ1 and TSHZ2. Interacts (via the WW domain) with histone H2AX (when phosphorylated on 'Tyr-142') and the proline-rich region of ENAH. Interacts with MAPK8. Interacts (via PID domain 1) with TSHZ3 (via homeobox domain). Interacts with SET. Found in a trimeric complex with HDAC1 and TSHZ3; the interaction between HDAC1 and APBB1 is mediated by TSHZ3. Interacts (via WWW domain) with NEK6. Interacts (via WWW domain) with ABL1. Interacts with RNF157. Interacts with ARF6. Phosphorylation at Ser-610 by SGK1 promotes its localization to the nucleus. Phosphorylated following nuclear translocation. Phosphorylation at Tyr-547 by ABL1 enhances transcriptional activation activity and reduces the affinity for RASD1/DEXRAS1. Phosphorylated at Ser-459 by PKC upon insulin activation. In terms of processing, acetylation at Lys-204 and Lys-701 by KAT5 promotes its transcription activator activity. Post-translationally, polyubiquitination by RNF157 leads to degradation by the proteasome. In terms of tissue distribution, highly expressed in brain; strongly reduced in post-mortem elderly subjects with Alzheimer disease. Expressed preferentially in the brain.

It localises to the cell membrane. The protein localises to the cytoplasm. The protein resides in the nucleus. It is found in the cell projection. Its subcellular location is the growth cone. It localises to the nucleus speckle. Transcription coregulator that can have both coactivator and corepressor functions. Adapter protein that forms a transcriptionally active complex with the gamma-secretase-derived amyloid precursor protein (APP) intracellular domain. Plays a central role in the response to DNA damage by translocating to the nucleus and inducing apoptosis. May act by specifically recognizing and binding histone H2AX phosphorylated on 'Tyr-142' (H2AXY142ph) at double-strand breaks (DSBs), recruiting other pro-apoptosis factors such as MAPK8/JNK1. Required for histone H4 acetylation at double-strand breaks (DSBs). Its ability to specifically bind modified histones and chromatin modifying enzymes such as KAT5/TIP60, probably explains its transcription activation activity. Functions in association with TSHZ3, SET and HDAC factors as a transcriptional repressor, that inhibits the expression of CASP4. Associates with chromatin in a region surrounding the CASP4 transcriptional start site(s). Involved in hippocampal neurite branching and neuromuscular junction formation, as a result plays a role in spatial memory functioning. Plays a role in the maintenance of lens transparency. May play a role in muscle cell strength. Acts as a molecular adapter that functions in neurite outgrowth by activating the RAC1-ARF6 axis upon insulin treatment. This Homo sapiens (Human) protein is Amyloid beta precursor protein binding family B member 1.